The following is a 627-amino-acid chain: ATP-dependent zinc metalloprotease FtsH 2 (627 aa).

Residues 1–7 (MKFSWRT) lie on the Cytoplasmic side of the membrane. A helical membrane pass occupies residues 8 to 28 (ALLWSLPLLVVGFFFWQGSFG). Residues 29–117 (GADANLGSNT…SHPVRNNGMV (89 aa)) lie on the Lumenal side of the membrane. A helical membrane pass occupies residues 118–138 (WGFVGNLIFPVLLIASLFFLF). The Cytoplasmic segment spans residues 139 to 627 (RRSSNMPGGP…PVKEQLIPQL (489 aa)). An ATP-binding site is contributed by 212–219 (GPPGTGKT). His-433 provides a ligand contact to Zn(2+). Glu-434 is an active-site residue. Residues His-437 and Asp-511 each contribute to the Zn(2+) site.

In the central section; belongs to the AAA ATPase family. It in the C-terminal section; belongs to the peptidase M41 family. As to quaternary structure, homohexamer (Potential). Part of a large (&gt;500 kDa) complex that includes FtsH3 and PSII. Coimmunoprecipitates with YidC. It depends on Zn(2+) as a cofactor.

It is found in the cellular thylakoid membrane. Its function is as follows. Acts as a processive, ATP-dependent zinc metallopeptidase for both cytoplasmic and membrane proteins. Plays a role in the quality control of integral membrane proteins. In terms of biological role, plays a role in the selective replacement of photosystem II (PSII) protein D1 in the PSII repair cycle following visible-light and UV-B induced damage. If damaged D1 is not removed then new D1 cannot be inserted to restore the PSII reaction center. Seems to also degrade damaged and/or unassembled PSII proteins D2 and PsbB (CP47). May recognize D1 via its first 20 amino acids, as deletion of these prevents the PSII repair cycle. Also seems to degrade cytoplasmic GGPS, glucosylglycerol-phosphate synthase. This Synechocystis sp. (strain ATCC 27184 / PCC 6803 / Kazusa) protein is ATP-dependent zinc metalloprotease FtsH 2 (ftsH2).